The following is a 78-amino-acid chain: Large ribosomal subunit protein bL28 (78 aa).

Positions 1–24 (MSRVCQVTGKRPAVGNNRSHANNA) are disordered.

Belongs to the bacterial ribosomal protein bL28 family.

This Aeromonas salmonicida (strain A449) protein is Large ribosomal subunit protein bL28.